We begin with the raw amino-acid sequence, 266 residues long: Dioicin-2 (266 aa).

Intrachain disulfides connect Cys32-Cys263 and Cys85-Cys102. Glu176 is an active-site residue.

It is found in the secreted. It localises to the extracellular space. The protein localises to the golgi apparatus. Its subcellular location is the vacuole. The catalysed reaction is Endohydrolysis of the N-glycosidic bond at one specific adenosine on the 28S rRNA.. In terms of biological role, nicks pBR322 dsDNA. Has adenine polynucleotide glycosidase activity on herring sperm ssDNA. This Phytolacca dioica (Bella sombra tree) protein is Dioicin-2.